The following is a 665-amino-acid chain: Translation factor guf1, mitochondrial (665 aa).

The N-terminal 53 residues, Met1–Asn53, are a transit peptide targeting the mitochondrion. A tr-type G domain is found at Glu67–Val247. GTP is bound by residues Ala76–Ser83, Asp140–His144, and Asn194–Asp197.

Belongs to the TRAFAC class translation factor GTPase superfamily. Classic translation factor GTPase family. LepA subfamily.

Its subcellular location is the mitochondrion inner membrane. The catalysed reaction is GTP + H2O = GDP + phosphate + H(+). Functionally, promotes mitochondrial protein synthesis. May act as a fidelity factor of the translation reaction, by catalyzing a one-codon backward translocation of tRNAs on improperly translocated ribosomes. Binds to mitochondrial ribosomes in a GTP-dependent manner. The protein is Translation factor guf1, mitochondrial (guf1) of Talaromyces stipitatus (strain ATCC 10500 / CBS 375.48 / QM 6759 / NRRL 1006) (Penicillium stipitatum).